A 185-amino-acid polypeptide reads, in one-letter code: Bcl-2-modifying factor (185 aa).

A disordered region spans residues 1 to 28 (MEPPQCVEELEDDVFQPEDGEPGTQPGS). Over residues 8–21 (EELEDDVFQPEDGE) the composition is skewed to acidic residues. An interaction with DLC2 region spans residues 67–75 (DKATQTLSP). The short motif at 134–148 (IARKLQCIADQFHRL) is the BH3 element.

Belongs to the Bcl-2 family. Interacts with MCL1, BCL2, BCL2L1/BCL-Xl, BCL2A1 and BCL2L2/BCL-w. Interacts with the myosin V actin motor complex through its binding to DLC2.

Its function is as follows. May play a role in apoptosis. In Rattus norvegicus (Rat), this protein is Bcl-2-modifying factor (Bmf).